Reading from the N-terminus, the 185-residue chain is Homeobox protein TGIF2LY (185 aa).

Disordered stretches follow at residues 1 to 58 (MEAA…GNLP) and 166 to 185 (RCQE…SSPE). The segment covering 21-39 (AKTQSPAQDTSIMSRNNAD) has biased composition (polar residues). A DNA-binding region (homeobox; TALE-type) is located at residues 48–111 (EHKKKRKGNL…INARRRILPD (64 aa)).

Belongs to the TALE/TGIF homeobox family. As to expression, specifically expressed in adult testis.

It localises to the nucleus. In terms of biological role, may have a transcription role in testis. May act as a competitor/regulator of TGIF2LX. In Homo sapiens (Human), this protein is Homeobox protein TGIF2LY (TGIF2LY).